The primary structure comprises 507 residues: Blue light receptor lreB (507 aa).

The region spanning 170–234 (RVLNEMKDML…EEMNECITTT (65 aa)) is the PAS domain. Residues 463–488 (CTDCGTSDSPEWRKGPEGPKTLCNAC) form a GATA-type zinc finger.

Functionally, probable transcription factor involved in light regulation. Plays crucial roles in fungal growth and asexual development. Involved in conidiophore formation, sclerotium production, and conidial stress tolerance. Positively regulates the fungal pathogenicity towards maize and aflatoxin B1 production. In Aspergillus flavus, this protein is Blue light receptor lreB.